The primary structure comprises 188 residues: Threonylcarbamoyl-AMP synthase (188 aa).

The region spanning glutamine 3–glutamine 188 is the YrdC-like domain.

Belongs to the SUA5 family. TsaC subfamily.

It localises to the cytoplasm. It carries out the reaction L-threonine + hydrogencarbonate + ATP = L-threonylcarbamoyladenylate + diphosphate + H2O. Required for the formation of a threonylcarbamoyl group on adenosine at position 37 (t(6)A37) in tRNAs that read codons beginning with adenine. Catalyzes the conversion of L-threonine, HCO(3)(-)/CO(2) and ATP to give threonylcarbamoyl-AMP (TC-AMP) as the acyladenylate intermediate, with the release of diphosphate. The chain is Threonylcarbamoyl-AMP synthase from Shewanella oneidensis (strain ATCC 700550 / JCM 31522 / CIP 106686 / LMG 19005 / NCIMB 14063 / MR-1).